The primary structure comprises 318 residues: Cytochrome c biogenesis protein CcsA (318 aa).

8 helical membrane-spanning segments follow: residues 17 to 37 (VLAL…ISFW), 45 to 65 (SAVV…QLVL), 75 to 95 (ISNL…AQLL), 104 to 124 (IVSA…SFAL), 149 to 169 (VIMC…AVLF), 224 to 244 (TITV…VWAN), 258 to 275 (TWAL…HTRF), and 287 to 307 (VAVA…LLGI).

Belongs to the CcmF/CycK/Ccl1/NrfE/CcsA family. As to quaternary structure, may interact with ccs1.

The protein resides in the cellular thylakoid membrane. In terms of biological role, required during biogenesis of c-type cytochromes (cytochrome c6 and cytochrome f) at the step of heme attachment. This Prochlorococcus marinus (strain MIT 9313) protein is Cytochrome c biogenesis protein CcsA.